Reading from the N-terminus, the 455-residue chain is Exodeoxyribonuclease 7 large subunit (455 aa).

Belongs to the XseA family. As to quaternary structure, heterooligomer composed of large and small subunits.

The protein resides in the cytoplasm. The enzyme catalyses Exonucleolytic cleavage in either 5'- to 3'- or 3'- to 5'-direction to yield nucleoside 5'-phosphates.. Its function is as follows. Bidirectionally degrades single-stranded DNA into large acid-insoluble oligonucleotides, which are then degraded further into small acid-soluble oligonucleotides. The protein is Exodeoxyribonuclease 7 large subunit of Lactobacillus acidophilus (strain ATCC 700396 / NCK56 / N2 / NCFM).